A 173-amino-acid chain; its full sequence is Photosystem I assembly protein Ycf3 (173 aa).

TPR repeat units lie at residues 35–68 (AYVY…EESP), 72–105 (SETL…NSNQ), and 120–153 (GRTA…YPGG).

This sequence belongs to the Ycf3 family.

The protein localises to the cellular thylakoid membrane. Functionally, essential for the assembly of the photosystem I (PSI) complex. May act as a chaperone-like factor to guide the assembly of the PSI subunits. This Prochlorococcus marinus (strain MIT 9313) protein is Photosystem I assembly protein Ycf3.